A 370-amino-acid chain; its full sequence is Phospho-N-acetylmuramoyl-pentapeptide-transferase (370 aa).

The next 11 helical transmembrane spans lie at 15–35 (PLEGKVSAGVLAVVVYAAAFA), 44–64 (LLSLPLLIATLIAAIVTWWGV), 93–113 (MGGLLVVPVGVIVGGLISWSG), 115–135 (AAEQLLAVAFITLAYMVVGGI), 155–175 (LLLQALAAVIFLIWAGMRGWI), 183–203 (FDINLPLNWLIWPLAVFVFLA), 213–233 (GLDGLAAGCGALVFTGMALQL), 240–260 (GDPSLAGFCMAMAGCWIGFLV), 268–288 (VFMGDTGSLAMGGALTAVALL), 296–316 (LIMGGIFLAESLSVIIQVWVF), and 347–367 (QLVVPGFWLATVFLVLIGIFF).

This sequence belongs to the glycosyltransferase 4 family. MraY subfamily. Mg(2+) serves as cofactor.

It is found in the cell inner membrane. The enzyme catalyses UDP-N-acetyl-alpha-D-muramoyl-L-alanyl-gamma-D-glutamyl-meso-2,6-diaminopimeloyl-D-alanyl-D-alanine + di-trans,octa-cis-undecaprenyl phosphate = di-trans,octa-cis-undecaprenyl diphospho-N-acetyl-alpha-D-muramoyl-L-alanyl-D-glutamyl-meso-2,6-diaminopimeloyl-D-alanyl-D-alanine + UMP. It participates in cell wall biogenesis; peptidoglycan biosynthesis. Its function is as follows. Catalyzes the initial step of the lipid cycle reactions in the biosynthesis of the cell wall peptidoglycan: transfers peptidoglycan precursor phospho-MurNAc-pentapeptide from UDP-MurNAc-pentapeptide onto the lipid carrier undecaprenyl phosphate, yielding undecaprenyl-pyrophosphoryl-MurNAc-pentapeptide, known as lipid I. The protein is Phospho-N-acetylmuramoyl-pentapeptide-transferase of Synechococcus sp. (strain CC9311).